We begin with the raw amino-acid sequence, 88 residues long: MLHSVQKTDIIQKYAIHDGDTGSPEVQIALLSERINQLQEHFRTHQKDHHSRRGLLKLVSQRRRQLDYLKRVDIERYRSLINRLNLRK.

Belongs to the universal ribosomal protein uS15 family. In terms of assembly, part of the 30S ribosomal subunit. Forms a bridge to the 50S subunit in the 70S ribosome, contacting the 23S rRNA.

One of the primary rRNA binding proteins, it binds directly to 16S rRNA where it helps nucleate assembly of the platform of the 30S subunit by binding and bridging several RNA helices of the 16S rRNA. Functionally, forms an intersubunit bridge (bridge B4) with the 23S rRNA of the 50S subunit in the ribosome. This Sorangium cellulosum (strain So ce56) (Polyangium cellulosum (strain So ce56)) protein is Small ribosomal subunit protein uS15.